Reading from the N-terminus, the 421-residue chain is Type II methyltransferase M.SfiI (421 aa).

Belongs to the N(4)/N(6)-methyltransferase family. N(4) subfamily.

It catalyses the reaction a 2'-deoxycytidine in DNA + S-adenosyl-L-methionine = an N(4)-methyl-2'-deoxycytidine in DNA + S-adenosyl-L-homocysteine + H(+). In terms of biological role, a beta subtype methylase, recognizes the double-stranded sequence 5'-GGCCNNNNNGGCC-3', methylates C-? on both strands, and protects the DNA from cleavage by the SfiI endonuclease. The sequence is that of Type II methyltransferase M.SfiI from Streptomyces fimbriatus.